Here is a 417-residue protein sequence, read N- to C-terminus: Serine hydroxymethyltransferase (417 aa).

Residues leucine 120 and 124–126 each bind (6S)-5,6,7,8-tetrahydrofolate; that span reads GHL. Position 229 is an N6-(pyridoxal phosphate)lysine (lysine 229). 354 to 356 is a (6S)-5,6,7,8-tetrahydrofolate binding site; sequence SPF.

The protein belongs to the SHMT family. In terms of assembly, homodimer. Pyridoxal 5'-phosphate is required as a cofactor.

Its subcellular location is the cytoplasm. The enzyme catalyses (6R)-5,10-methylene-5,6,7,8-tetrahydrofolate + glycine + H2O = (6S)-5,6,7,8-tetrahydrofolate + L-serine. The protein operates within one-carbon metabolism; tetrahydrofolate interconversion. It functions in the pathway amino-acid biosynthesis; glycine biosynthesis; glycine from L-serine: step 1/1. In terms of biological role, catalyzes the reversible interconversion of serine and glycine with tetrahydrofolate (THF) serving as the one-carbon carrier. This reaction serves as the major source of one-carbon groups required for the biosynthesis of purines, thymidylate, methionine, and other important biomolecules. Also exhibits THF-independent aldolase activity toward beta-hydroxyamino acids, producing glycine and aldehydes, via a retro-aldol mechanism. This chain is Serine hydroxymethyltransferase, found in Acinetobacter baumannii (strain AB307-0294).